Here is a 1005-residue protein sequence, read N- to C-terminus: Non-structural polyprotein 1A (1005 aa).

Transmembrane regions (helical) follow at residues 239–259 (PDGAFDKESLALECSKQMDYM), 286–306 (DEIVTAIRTVVRFAMDFSLAY), 313–333 (VLILTRNKKHAIISACCALVA), and 344–364 (TLVLTYAPSETAIAGCIYGLG). Active-site charge relay system; for serine protease activity residues include histidine 524, aspartate 556, and serine 621. An O-(5'-phospho-RNA)-tyrosine modification is found at tyrosine 753. Residues 940–984 (PVIQQVEQQPQVEQQQQPQQPVVEEKKRTPPPKPQRKPKTGAKAK) are disordered. A compositionally biased stretch (low complexity) spans 941 to 961 (VIQQVEQQPQVEQQQQPQQPV).

This sequence belongs to the astroviridae polyprotein 1A family. As to quaternary structure, monomer. Post-translationally, cleaved by the viral and host proteases. The protease is probably autocatalytically cleaved.

Its subcellular location is the host membrane. It catalyses the reaction RNA(n) + a ribonucleoside 5'-triphosphate = RNA(n+1) + diphosphate. Responsible for the cleavage of the polyprotein into functional products. In terms of biological role, protein covalently attached to the 5' extremity of the genomic and subgenomic RNAs. It may serve as a primer for the replicase. The polypeptide is Non-structural polyprotein 1A (ORF1) (Avian nephritis virus 1 (ANV-1)).